The primary structure comprises 214 residues: Pyridoxine/pyridoxamine 5'-phosphate oxidase (214 aa).

Substrate contacts are provided by residues Arg8 to Tyr11 and Lys66. FMN is bound by residues Arg61–Lys66, Phe76–Thr77, Arg82, Lys83, and Gln105. Substrate contacts are provided by Tyr123, Arg127, and Ser131. FMN is bound by residues Gln140–Ser141 and Trp184. Arg190–His192 lines the substrate pocket. Arg194 contacts FMN.

This sequence belongs to the pyridoxamine 5'-phosphate oxidase family. Homodimer. Requires FMN as cofactor.

The catalysed reaction is pyridoxamine 5'-phosphate + O2 + H2O = pyridoxal 5'-phosphate + H2O2 + NH4(+). The enzyme catalyses pyridoxine 5'-phosphate + O2 = pyridoxal 5'-phosphate + H2O2. The protein operates within cofactor metabolism; pyridoxal 5'-phosphate salvage; pyridoxal 5'-phosphate from pyridoxamine 5'-phosphate: step 1/1. It functions in the pathway cofactor metabolism; pyridoxal 5'-phosphate salvage; pyridoxal 5'-phosphate from pyridoxine 5'-phosphate: step 1/1. Catalyzes the oxidation of either pyridoxine 5'-phosphate (PNP) or pyridoxamine 5'-phosphate (PMP) into pyridoxal 5'-phosphate (PLP). The chain is Pyridoxine/pyridoxamine 5'-phosphate oxidase from Burkholderia cenocepacia (strain HI2424).